A 327-amino-acid chain; its full sequence is Phenylalanine--tRNA ligase alpha subunit (327 aa).

E252 serves as a coordination point for Mg(2+).

Belongs to the class-II aminoacyl-tRNA synthetase family. Phe-tRNA synthetase alpha subunit type 1 subfamily. Tetramer of two alpha and two beta subunits. Requires Mg(2+) as cofactor.

The protein localises to the cytoplasm. It carries out the reaction tRNA(Phe) + L-phenylalanine + ATP = L-phenylalanyl-tRNA(Phe) + AMP + diphosphate + H(+). In Serratia proteamaculans (strain 568), this protein is Phenylalanine--tRNA ligase alpha subunit.